We begin with the raw amino-acid sequence, 241 residues long: Proteasome subunit alpha (241 aa).

Belongs to the peptidase T1A family. The 20S proteasome core is composed of 14 alpha and 14 beta subunits that assemble into four stacked heptameric rings, resulting in a barrel-shaped structure. The two inner rings, each composed of seven catalytic beta subunits, are sandwiched by two outer rings, each composed of seven alpha subunits. The catalytic chamber with the active sites is on the inside of the barrel. Has a gated structure, the ends of the cylinder being occluded by the N-termini of the alpha-subunits. Is capped by the proteasome-associated ATPase, ARC.

It is found in the cytoplasm. The protein operates within protein degradation; proteasomal Pup-dependent pathway. Its activity is regulated as follows. The formation of the proteasomal ATPase ARC-20S proteasome complex, likely via the docking of the C-termini of ARC into the intersubunit pockets in the alpha-rings, may trigger opening of the gate for substrate entry. Interconversion between the open-gate and close-gate conformations leads to a dynamic regulation of the 20S proteasome proteolysis activity. Component of the proteasome core, a large protease complex with broad specificity involved in protein degradation. The chain is Proteasome subunit alpha from Frankia alni (strain DSM 45986 / CECT 9034 / ACN14a).